We begin with the raw amino-acid sequence, 360 residues long: Phosphoserine aminotransferase (360 aa).

Arginine 42 contributes to the L-glutamate binding site. Residues alanine 76 to serine 77, tryptophan 102, threonine 152, aspartate 172, and glutamine 195 contribute to the pyridoxal 5'-phosphate site. At lysine 196 the chain carries N6-(pyridoxal phosphate)lysine. A pyridoxal 5'-phosphate-binding site is contributed by asparagine 237–threonine 238.

The protein belongs to the class-V pyridoxal-phosphate-dependent aminotransferase family. SerC subfamily. In terms of assembly, homodimer. Pyridoxal 5'-phosphate is required as a cofactor.

The protein resides in the cytoplasm. It catalyses the reaction O-phospho-L-serine + 2-oxoglutarate = 3-phosphooxypyruvate + L-glutamate. The catalysed reaction is 4-(phosphooxy)-L-threonine + 2-oxoglutarate = (R)-3-hydroxy-2-oxo-4-phosphooxybutanoate + L-glutamate. It functions in the pathway amino-acid biosynthesis; L-serine biosynthesis; L-serine from 3-phospho-D-glycerate: step 2/3. Catalyzes the reversible conversion of 3-phosphohydroxypyruvate to phosphoserine and of 3-hydroxy-2-oxo-4-phosphonooxybutanoate to phosphohydroxythreonine. This chain is Phosphoserine aminotransferase, found in Bacillus cereus (strain ATCC 14579 / DSM 31 / CCUG 7414 / JCM 2152 / NBRC 15305 / NCIMB 9373 / NCTC 2599 / NRRL B-3711).